A 211-amino-acid chain; its full sequence is Claudin-1 (211 aa).

The Cytoplasmic segment spans residues 1–7 (MANAGLQ). The chain crosses the membrane as a helical span at residues 8–28 (LLGFILASLGWIGSIVSTALP). Residues 29–81 (QWKIYSYAGDNIVTAQAIYEGLWMSCVSQSTGQIQCKVFDSLLNLNSTLQATR) lie on the Extracellular side of the membrane. Cysteine 54 and cysteine 64 form a disulfide bridge. Residues 82–102 (ALMVIGILLGLIAIFVSTIGM) traverse the membrane as a helical segment. Residues 103–115 (KCMRCLEDDEVQK) are Cytoplasmic-facing. The chain crosses the membrane as a helical span at residues 116–136 (MWMAVIGGIIFVISGLATLVA). The Extracellular portion of the chain corresponds to 137 to 163 (TAWYGNRIVQEFYDPMTPVNARYEFGQ). The helical transmembrane segment at 164–184 (ALFTGWAAASLCLLGGALLSC) threads the bilayer. Over 185–211 (SCPRKTTSYPTPRPYPKPTPSSGKDYV) the chain is Cytoplasmic. The tract at residues 190 to 211 (TTSYPTPRPYPKPTPSSGKDYV) is disordered. Positions 210–211 (YV) are interactions with TJP1, TJP2, TJP3 and PATJ.

It belongs to the claudin family. Can form homo- and heteropolymers with other CLDN. Homopolymers interact with CLDN3, but not CLDN2, homopolymers. Directly interacts with TJP1/ZO-1, TJP2/ZO-2 and TJP3/ZO-3. Interacts with MPDZ and PATJ. Interacts with OCLN, CD81, CLDN4, CLDN6 and CLDN9. As to expression, detected in epididymis (at protein level). Detected in testis and epididymis.

The protein resides in the cell junction. Its subcellular location is the tight junction. The protein localises to the cell membrane. It localises to the basolateral cell membrane. Its function is as follows. Claudins function as major constituents of the tight junction complexes that regulate the permeability of epithelia. While some claudin family members play essential roles in the formation of impermeable barriers, others mediate the permeability to ions and small molecules. Often, several claudin family members are coexpressed and interact with each other, and this determines the overall permeability. CLDN1 is required to prevent the paracellular diffusion of small molecules through tight junctions in the epidermis and is required for the normal barrier function of the skin. Required for normal water homeostasis and to prevent excessive water loss through the skin, probably via an indirect effect on the expression levels of other proteins, since CLDN1 itself seems to be dispensable for water barrier formation in keratinocyte tight junctions. The polypeptide is Claudin-1 (Cldn1) (Rattus norvegicus (Rat)).